We begin with the raw amino-acid sequence, 155 residues long: Small ribosomal subunit protein uS7 (155 aa).

It belongs to the universal ribosomal protein uS7 family. Part of the 30S ribosomal subunit. Contacts proteins S9 and S11.

Its function is as follows. One of the primary rRNA binding proteins, it binds directly to 16S rRNA where it nucleates assembly of the head domain of the 30S subunit. Is located at the subunit interface close to the decoding center, probably blocks exit of the E-site tRNA. This chain is Small ribosomal subunit protein uS7, found in Corynebacterium diphtheriae (strain ATCC 700971 / NCTC 13129 / Biotype gravis).